Reading from the N-terminus, the 487-residue chain is Berbamunine synthase (487 aa).

Residue Cys429 coordinates heme.

The protein belongs to the cytochrome P450 family. It depends on heme as a cofactor.

The protein resides in the endoplasmic reticulum membrane. The protein localises to the microsome membrane. The catalysed reaction is (R)-N-methylcoclaurine + (S)-N-methylcoclaurine + reduced [NADPH--hemoprotein reductase] + O2 = berbamunine + oxidized [NADPH--hemoprotein reductase] + 2 H2O + H(+). It participates in alkaloid biosynthesis; berbamunine biosynthesis; berbamunine from (R)-N-methylcoclaurine and (S)-N-methylcoclaurine: step 1/1. Forms the bisbenzylisoquinoline alkaloid berbamunine by phenol oxidation of N-methylcoclaurine without the incorporation of oxygen into the product. Oxidatively couples either two molecules of (R)-N-methylcoclaurine to form the (R,R) dimer guattegaumerine or one molecule each of (R)- and (S)-N-methylcoclaurine to form the (R,S) dimer berbamunine. The sequence is that of Berbamunine synthase (CYP80A1) from Berberis stolonifera (Barberry).